We begin with the raw amino-acid sequence, 398 residues long: NADH-quinone oxidoreductase subunit D (398 aa).

The protein belongs to the complex I 49 kDa subunit family. In terms of assembly, NDH-1 is composed of 14 different subunits. Subunits NuoB, C, D, E, F, and G constitute the peripheral sector of the complex.

It localises to the cell inner membrane. It carries out the reaction a quinone + NADH + 5 H(+)(in) = a quinol + NAD(+) + 4 H(+)(out). In terms of biological role, NDH-1 shuttles electrons from NADH, via FMN and iron-sulfur (Fe-S) centers, to quinones in the respiratory chain. The immediate electron acceptor for the enzyme in this species is believed to be ubiquinone. Couples the redox reaction to proton translocation (for every two electrons transferred, four hydrogen ions are translocated across the cytoplasmic membrane), and thus conserves the redox energy in a proton gradient. This Bradyrhizobium diazoefficiens (strain JCM 10833 / BCRC 13528 / IAM 13628 / NBRC 14792 / USDA 110) protein is NADH-quinone oxidoreductase subunit D.